We begin with the raw amino-acid sequence, 81 residues long: Trefoil factor 1 (81 aa).

The N-terminal stretch at 1-23 is a signal peptide; sequence MEHRVIYVLVLVCALTLSSLAQG. The P-type domain occupies 26–69; the sequence is ETCTVAPHHRDNCGSPGITPSQCKDKGCCFDNTVRGVPWCYYPV. Intrachain disulfides connect Cys28-Cys54, Cys38-Cys53, and Cys48-Cys65.

The protein localises to the secreted. Its function is as follows. Stabilizer of the mucous gel overlying the gastrointestinal mucosa that provides a physical barrier against various noxious agents. The sequence is that of Trefoil factor 1 (TFF1) from Canis lupus familiaris (Dog).